A 332-amino-acid chain; its full sequence is MKVSFEQLKAAFNRVLLSRGVAVETADACAEMFARTTESGVYSHGVNRFPRFIQQLDNGDIIPDAEAKRITTLGAIEQWDAQRSIGNLTAKKMMDRAIELAADHGIGLVALRNANHWMRGGSYGWQAAEKGYIGICWTNSIAVMPPWGAKECRIGTNPLIVAIPSTPITMVDMSMSMFSYGMLEVNRLAGRQLPVDGGFDDEGNLTKEPGVIEKNRRILPMGYWKGSGMSIVLDMIATLLSDGASVAEVTQDNSDEYGVSQIFIAIEVDKLIDGPTRDAKLQRIMDYVTTAERADENQAIRLPGHEFTTLLAENRRNGITVDDSVWAKIQAL.

His44 functions as the Proton donor in the catalytic mechanism. NAD(+) is bound by residues 168-174 (ITMVDMS), 224-225 (WK), and 304-306 (GHE).

This sequence belongs to the LDH2/MDH2 oxidoreductase family. DlgD subfamily. Homodimer.

It localises to the cytoplasm. It catalyses the reaction 3-dehydro-L-gulonate + NAD(+) = 2,3-dioxo-L-gulonate + NADH + H(+). It carries out the reaction 3-dehydro-L-gulonate + NADP(+) = 2,3-dioxo-L-gulonate + NADPH + H(+). Catalyzes the reduction of 2,3-diketo-L-gulonate in the presence of NADH, to form 3-keto-L-gulonate. The protein is 2,3-diketo-L-gulonate reductase of Escherichia fergusonii (strain ATCC 35469 / DSM 13698 / CCUG 18766 / IAM 14443 / JCM 21226 / LMG 7866 / NBRC 102419 / NCTC 12128 / CDC 0568-73).